The chain runs to 204 residues: ATP phosphoribosyltransferase (204 aa).

This sequence belongs to the ATP phosphoribosyltransferase family. Short subfamily. As to quaternary structure, heteromultimer composed of HisG and HisZ subunits.

The protein resides in the cytoplasm. It catalyses the reaction 1-(5-phospho-beta-D-ribosyl)-ATP + diphosphate = 5-phospho-alpha-D-ribose 1-diphosphate + ATP. It participates in amino-acid biosynthesis; L-histidine biosynthesis; L-histidine from 5-phospho-alpha-D-ribose 1-diphosphate: step 1/9. Catalyzes the condensation of ATP and 5-phosphoribose 1-diphosphate to form N'-(5'-phosphoribosyl)-ATP (PR-ATP). Has a crucial role in the pathway because the rate of histidine biosynthesis seems to be controlled primarily by regulation of HisG enzymatic activity. The protein is ATP phosphoribosyltransferase of Staphylococcus aureus (strain bovine RF122 / ET3-1).